A 350-amino-acid polypeptide reads, in one-letter code: Histidinol-phosphate aminotransferase (350 aa).

Residue lysine 210 is modified to N6-(pyridoxal phosphate)lysine.

The protein belongs to the class-II pyridoxal-phosphate-dependent aminotransferase family. Histidinol-phosphate aminotransferase subfamily. In terms of assembly, homodimer. Pyridoxal 5'-phosphate is required as a cofactor.

It carries out the reaction L-histidinol phosphate + 2-oxoglutarate = 3-(imidazol-4-yl)-2-oxopropyl phosphate + L-glutamate. It functions in the pathway amino-acid biosynthesis; L-histidine biosynthesis; L-histidine from 5-phospho-alpha-D-ribose 1-diphosphate: step 7/9. In Pseudomonas syringae pv. syringae (strain B728a), this protein is Histidinol-phosphate aminotransferase.